Here is a 168-residue protein sequence, read N- to C-terminus: Dihydrofolate reductase (168 aa).

The 159-residue stretch at 1–159 (MISFIFAMDA…YDYEFLMYEK (159 aa)) folds into the DHFR domain. Substrate is bound at residue 5-7 (IFA). NADP(+) is bound by residues 6–7 (FA) and 14–19 (IGKDND). Asp-27 lines the substrate pocket. 43-46 (GRKT) serves as a coordination point for NADP(+). Substrate is bound at residue Arg-57. NADP(+) is bound by residues 62-65 (VTSA) and 95-100 (IGGAQL). A substrate-binding site is contributed by Thr-114.

Belongs to the dihydrofolate reductase family.

It catalyses the reaction (6S)-5,6,7,8-tetrahydrofolate + NADP(+) = 7,8-dihydrofolate + NADPH + H(+). The protein operates within cofactor biosynthesis; tetrahydrofolate biosynthesis; 5,6,7,8-tetrahydrofolate from 7,8-dihydrofolate: step 1/1. Its function is as follows. Key enzyme in folate metabolism. Catalyzes an essential reaction for de novo glycine and purine synthesis, and for DNA precursor synthesis. The chain is Dihydrofolate reductase (dfrA) from Bacillus subtilis (strain 168).